The following is a 215-amino-acid chain: Adenylate kinase (215 aa).

ATP is bound at residue 10-15 (GAGKGT). The segment at 30–59 (STGDMFRKAIKEETELGKEAKSYMDRGELV) is NMP. Residues T31, R36, 57–59 (ELV), 85–88 (GFPR), and Q92 contribute to the AMP site. The interval 126 to 163 (GRRICESCGTTYHLVFNPPKVEGICDIDGGKLYQREDD) is LID. R127 lines the ATP pocket. 2 residues coordinate Zn(2+): C130 and C133. An ATP-binding site is contributed by 136 to 137 (TY). Residues C150 and D153 each contribute to the Zn(2+) site. Positions 160 and 171 each coordinate AMP. K199 provides a ligand contact to ATP.

The protein belongs to the adenylate kinase family. As to quaternary structure, monomer.

The protein localises to the cytoplasm. The catalysed reaction is AMP + ATP = 2 ADP. It functions in the pathway purine metabolism; AMP biosynthesis via salvage pathway; AMP from ADP: step 1/1. Catalyzes the reversible transfer of the terminal phosphate group between ATP and AMP. Plays an important role in cellular energy homeostasis and in adenine nucleotide metabolism. This is Adenylate kinase from Staphylococcus aureus (strain COL).